We begin with the raw amino-acid sequence, 167 residues long: Ribosome maturation factor RimM (167 aa).

The 72-residue stretch at 94-165 (ENEFYYSDII…KIIITPMEGL (72 aa)) folds into the PRC barrel domain.

The protein belongs to the RimM family. Binds ribosomal protein uS19.

It localises to the cytoplasm. In terms of biological role, an accessory protein needed during the final step in the assembly of 30S ribosomal subunit, possibly for assembly of the head region. Essential for efficient processing of 16S rRNA. May be needed both before and after RbfA during the maturation of 16S rRNA. It has affinity for free ribosomal 30S subunits but not for 70S ribosomes. This chain is Ribosome maturation factor RimM, found in Staphylococcus aureus (strain MRSA252).